Reading from the N-terminus, the 115-residue chain is Alpha-endosulfine (115 aa).

Over residues 1–10 (MSSENLSDTQ) the composition is skewed to polar residues. The interval 1 to 27 (MSSENLSDTQMEYEDEKQDSQEKNANL) is disordered. Ser65 is subject to Phosphoserine; by GWL. The tract at residues 77–115 (NKQLPVAGPDKNLVTGDHIPTPQDLPQRRSSLVTSKLAG) is disordered. Residues 104-115 (RRSSLVTSKLAG) are compositionally biased toward polar residues.

This sequence belongs to the endosulfine family. Post-translationally, phosphorylation at Ser-65 by gwl during mitosis is essential for interaction with ppp2r2d (PR55-delta) and subsequent inactivation of PP2A.

It localises to the cytoplasm. Its function is as follows. Protein phosphatase inhibitor that specifically inhibits protein phosphatase 2A (PP2A) during mitosis. When phosphorylated at Ser-67 during mitosis, specifically interacts with ppp2r2d (PR55-delta) and inhibits its activity, leading to inactivation of PP2A, an essential condition to keep cyclin-B1-CDK1 activity high during M phase. The polypeptide is Alpha-endosulfine (ensa) (Salmo salar (Atlantic salmon)).